The sequence spans 231 residues: Fibrillarin-like rRNA/tRNA 2'-O-methyltransferase (231 aa).

S-adenosyl-L-methionine is bound by residues 89-90 (TT), 108-109 (EF), 133-134 (DA), and 153-156 (DIAQ).

This sequence belongs to the methyltransferase superfamily. Fibrillarin family. In terms of assembly, interacts with nop5. Component of box C/D small ribonucleoprotein (sRNP) particles that contain rpl7ae, FlpA and nop5, plus a guide RNA.

Involved in pre-rRNA and tRNA processing. Utilizes the methyl donor S-adenosyl-L-methionine to catalyze the site-specific 2'-hydroxyl methylation of ribose moieties in rRNA and tRNA. Site specificity is provided by a guide RNA that base pairs with the substrate. Methylation occurs at a characteristic distance from the sequence involved in base pairing with the guide RNA. This is Fibrillarin-like rRNA/tRNA 2'-O-methyltransferase from Sulfolobus acidocaldarius (strain ATCC 33909 / DSM 639 / JCM 8929 / NBRC 15157 / NCIMB 11770).